Consider the following 630-residue polypeptide: Putative lipase atg15 (630 aa).

Residues 1-20 (MKSSQRRIKRHAMRDMSIST) are Cytoplasmic-facing. A helical; Signal-anchor for type II membrane protein transmembrane segment spans residues 21–40 (LLLSVVLLPSVVSANDHVYF). At 41 to 630 (NPPSPGSPFL…WGSDIEHYEI (590 aa)) the chain is on the lumenal side. Residues asparagine 200, asparagine 222, asparagine 280, and asparagine 304 are each glycosylated (N-linked (GlcNAc...) asparagine). The active-site Charge relay system is serine 320. N-linked (GlcNAc...) asparagine glycosylation occurs at asparagine 466. A compositionally biased stretch (polar residues) spans 577–589 (SVTAPPFSTSTSS). Positions 577-599 (SVTAPPFSTSTSSDHVRADHSIG) are disordered.

It belongs to the AB hydrolase superfamily. Lipase family. Binds to both phosphatidylinositol (PI) and phosphatidylinositol 3,5-bisphosphate (PIP2).

The protein resides in the endosome. It localises to the multivesicular body membrane. The protein localises to the prevacuolar compartment membrane. It catalyses the reaction a triacylglycerol + H2O = a diacylglycerol + a fatty acid + H(+). In terms of biological role, lipase which is essential for lysis of subvacuolar cytoplasm to vacuole targeted bodies and intravacuolar autophagic bodies. Involved in the lysis of intravacuolar multivesicular body (MVB) vesicles. The intravacuolar membrane disintegration by atg15 is critical to life span extension. The chain is Putative lipase atg15 (atg15) from Aspergillus clavatus (strain ATCC 1007 / CBS 513.65 / DSM 816 / NCTC 3887 / NRRL 1 / QM 1276 / 107).